The chain runs to 152 residues: D-aminoacyl-tRNA deacylase (152 aa).

Residues 137 to 138 (GP) carry the Gly-cisPro motif, important for rejection of L-amino acids motif.

Belongs to the DTD family. In terms of assembly, homodimer.

The protein resides in the cytoplasm. It carries out the reaction glycyl-tRNA(Ala) + H2O = tRNA(Ala) + glycine + H(+). It catalyses the reaction a D-aminoacyl-tRNA + H2O = a tRNA + a D-alpha-amino acid + H(+). An aminoacyl-tRNA editing enzyme that deacylates mischarged D-aminoacyl-tRNAs. Also deacylates mischarged glycyl-tRNA(Ala), protecting cells against glycine mischarging by AlaRS. Acts via tRNA-based rather than protein-based catalysis; rejects L-amino acids rather than detecting D-amino acids in the active site. By recycling D-aminoacyl-tRNA to D-amino acids and free tRNA molecules, this enzyme counteracts the toxicity associated with the formation of D-aminoacyl-tRNA entities in vivo and helps enforce protein L-homochirality. The polypeptide is D-aminoacyl-tRNA deacylase (Methylibium petroleiphilum (strain ATCC BAA-1232 / LMG 22953 / PM1)).